A 349-amino-acid chain; its full sequence is MGKVSFGFLGLMLVVVVIGVVECRRFEKETLGGGGGGGLGGGFGGGKGFGGGIGAGGGFGGGAGGGAGGGLGGGAGGGGGIGGGAGGGAGGGLGGGAGGGLGGGHGGGIGGGAGGGAGGGLGGGHGGGIGGGAGGGSGGGLGGGIGGGAGGGAGGGGGLGGGHGGGIGGGAGGGAGGGLGGGHGGGIGGGAGGGSGGGLGGGIGGGAGGGAGGGGGAGGGGGLGGGHGGGFGGGAGGGLGGGAGGGTGGGFGGGAGGGAGGGAGGGFGGGAGGGAGGGFGGGAGGGAGGGAGGGFGGGAGGGHGGGVGGGFGGGSGGGFGGGAGGGAGGGAGGGFGGGGGAGGGFGGGF.

Positions 1 to 23 (MGKVSFGFLGLMLVVVVIGVVEC) are cleaved as a signal peptide.

It localises to the secreted. The protein resides in the cell wall. Functionally, responsible for plasticity of the cell wall. This Arabidopsis thaliana (Mouse-ear cress) protein is Glycine-rich cell wall structural protein.